The primary structure comprises 499 residues: Potassium voltage-gated channel subfamily A member 2 (499 aa).

The segment at 1–26 (MTVATEDPADEAAALPGHPQDTYDPE) is disordered. The tetramerization domain stretch occupies residues 1–125 (MTVATEDPAD…YELGEEAMEM (125 aa)). Residues 1-160 (MTVATEDPAD…LLFEYPESSG (160 aa)) are Cytoplasmic-facing. The helical transmembrane segment at 161–182 (PARIIAIVSVMVILISIVSFCL) threads the bilayer. The Extracellular portion of the chain corresponds to 183–221 (ETLPIFRDENEDMHGSGMTFHTYSNSTAGYQQSTSFTDP). Asn207 carries N-linked (GlcNAc...) asparagine glycosylation. A helical transmembrane segment spans residues 222 to 243 (FFIVETLCIIWFSFEFLVRFFA). Cys244 carries the S-palmitoyl cysteine lipid modification. Residues 244–254 (CPSKAGFFTNI) lie on the Cytoplasmic side of the membrane. A helical membrane pass occupies residues 255–275 (MNIIDIVAIIPYFITLGTELA). Residues 276 to 289 (EKPEDAQQGQQAMS) are Extracellular-facing. The helical; Voltage-sensor transmembrane segment at 290 to 310 (LAILRVIRLVRVFRIFKLSRH) threads the bilayer. Residues 311-325 (SKGLQILGQTLKASM) are Cytoplasmic-facing. Residues 312-325 (KGLQILGQTLKASM) are S4-S5 linker. Residues 326–347 (RELGLLIFFLFIGVILFSSAVY) traverse the membrane as a helical segment. Residues 348 to 361 (FAEADERDSQFPSI) are Extracellular-facing. The segment at residues 362-373 (PDAFWWAVVSMT) is an intramembrane region (helical). The short motif at 374–379 (TVGYGD) is the Selectivity filter element. The stretch at 374–381 (TVGYGDMV) is an intramembrane region. Over 382 to 388 (PTTIGGK) the chain is Extracellular. A helical membrane pass occupies residues 389–417 (IVGSLCAIAGVLTIALPVPVIVSNFNYFY). At 418 to 499 (HRETEGEEQA…VNITKMLTDV (82 aa)) the chain is on the cytoplasmic side. At Tyr429 the chain carries Phosphotyrosine. Residues Ser434, Ser440, Ser441, and Ser449 each carry the phosphoserine modification. Phosphotyrosine is present on Tyr458. At Ser468 the chain carries Phosphoserine. The short motif at 497–499 (TDV) is the PDZ-binding element.

Belongs to the potassium channel family. A (Shaker) (TC 1.A.1.2) subfamily. Kv1.2/KCNA2 sub-subfamily. In terms of assembly, homotetramer and heterotetramer with other channel-forming alpha subunits, such as KCNA1, KCNA4, KCNA5, KCNA6 and KCNA7. Channel activity is regulated by interaction with the beta subunits, including KCNAB1 and KCNAB2. Identified in a complex with KCNA1 and KCNAB2. Identified in a complex with KCNA4 and FYN. Identified in a complex with KCNA5 and KCNAB1. Interacts with the beta subunit KCNAB1. Interacts with PTK2B. Interacts (via C-terminus) with CTTN. Interacts (via N-terminal cytoplasmic domain) with RHOA (GTP-bound form); this regulates channel activity by reducing location at the cell surface in response to CHRM1 activation. Interacts with DRD2. Interacts with SIGMAR1; cocaine consumption leads to increased interaction. Interacts with ADAM22. Interacts with CNTNAP2. Interacts (via C-terminus) with the PDZ domains of DLG1, DLG2 and DLG4. Interacts with ADAM11. Interacts with LYNX1. Post-translationally, phosphorylated on tyrosine residues; phosphorylation increases in response to ischemia. Phosphorylated on tyrosine residues by activated PTK2B/PYK2. Phosphorylation on tyrosine residues suppresses ion channel activity. Phosphorylated on tyrosine residues in response to CHRM1 activation; this abolishes interaction with CTTN. This is probably due to endocytosis of the phosphorylated channel subunits. Phosphorylated on serine residues in response to increased cAMP levels; phosphorylation is apparently not catalyzed by PKA. N-glycosylated, with complex, sialylated N-glycans. In terms of tissue distribution, detected in portal vein myocytes (at protein level). Detected in portal vein. Brain, liver and kidney.

Its subcellular location is the cell membrane. The protein resides in the membrane. It is found in the cell projection. It localises to the axon. The protein localises to the synapse. Its subcellular location is the presynaptic cell membrane. The protein resides in the synaptosome. It is found in the endoplasmic reticulum membrane. It localises to the dendrite. The protein localises to the lamellipodium membrane. Its subcellular location is the cell junction. The protein resides in the paranodal septate junction. It catalyses the reaction K(+)(in) = K(+)(out). With respect to regulation, inhibited by 4-aminopyridine (4-AP). Inhibited by dendrotoxin (DTX) and charybdotoxin (CTX), but not by tetraethylammonium (TEA). Inhibited by tityustoxin-K alpha (TsTX-Kalpha), a toxin that is highly specific for KCNA2. Inhibited by maurotoxin. Inhibited by kappaM conotoxins kappaM-RIIIJ and kappaM-RIIIK. Functionally, voltage-gated potassium channel that mediates transmembrane potassium transport in excitable membranes, primarily in the brain and the central nervous system, but also in the cardiovascular system. Prevents aberrant action potential firing and regulates neuronal output. Forms tetrameric potassium-selective channels through which potassium ions pass in accordance with their electrochemical gradient. The channel alternates between opened and closed conformations in response to the voltage difference across the membrane. Can form functional homotetrameric channels and heterotetrameric channels that contain variable proportions of KCNA1, KCNA2, KCNA4, KCNA5, KCNA6, KCNA7, and possibly other family members as well; channel properties depend on the type of alpha subunits that are part of the channel. Channel properties are modulated by cytoplasmic beta subunits that regulate the subcellular location of the alpha subunits and promote rapid inactivation of delayed rectifier potassium channels. In vivo, membranes probably contain a mixture of heteromeric potassium channel complexes, making it difficult to assign currents observed in intact tissues to any particular potassium channel family member. Homotetrameric KCNA2 forms a delayed-rectifier potassium channel that opens in response to membrane depolarization, followed by slow spontaneous channel closure. In contrast, a heteromultimer formed by KCNA2 and KCNA4 shows rapid inactivation. Regulates neuronal excitability and plays a role as pacemaker in the regulation of neuronal action potentials. KCNA2-containing channels play a presynaptic role and prevent hyperexcitability and aberrant action potential firing. Response to toxins that are selective for KCNA2-containing potassium channels suggests that in Purkinje cells, dendritic subthreshold KCNA2-containing potassium channels prevent random spontaneous calcium spikes, suppressing dendritic hyperexcitability without hindering the generation of somatic action potentials, and thereby play an important role in motor coordination. Plays a role in the induction of long-term potentiation of neuron excitability in the CA3 layer of the hippocampus. May function as down-stream effector for G protein-coupled receptors and inhibit GABAergic inputs to basolateral amygdala neurons. May contribute to the regulation of neurotransmitter release, such as gamma-aminobutyric acid (GABA). Contributes to the regulation of the axonal release of the neurotransmitter dopamine. Reduced KCNA2 expression plays a role in the perception of neuropathic pain after peripheral nerve injury, but not acute pain. Plays a role in the regulation of the time spent in non-rapid eye movement (NREM) sleep. This chain is Potassium voltage-gated channel subfamily A member 2 (KCNA2), found in Oryctolagus cuniculus (Rabbit).